The sequence spans 198 residues: Na(+)-translocating NADH-quinone reductase subunit E (198 aa).

Helical transmembrane passes span 11-31 (AVFIENMALAFFLGMCTFLAV), 35-55 (VTTAFGLGIAVTVVLGISVPA), 77-97 (FLNFITFIGVIAALVQILEMI), 109-129 (LGIFLPLITVNCAIFGGVSFM), 140-160 (IVYGFGSGIGWMLAIVLLASI), and 176-196 (LGITFVTTGLMALGFMSFSGV).

This sequence belongs to the NqrDE/RnfAE family. As to quaternary structure, composed of six subunits; NqrA, NqrB, NqrC, NqrD, NqrE and NqrF.

The protein resides in the cell inner membrane. The enzyme catalyses a ubiquinone + n Na(+)(in) + NADH + H(+) = a ubiquinol + n Na(+)(out) + NAD(+). Its function is as follows. NQR complex catalyzes the reduction of ubiquinone-1 to ubiquinol by two successive reactions, coupled with the transport of Na(+) ions from the cytoplasm to the periplasm. NqrA to NqrE are probably involved in the second step, the conversion of ubisemiquinone to ubiquinol. The sequence is that of Na(+)-translocating NADH-quinone reductase subunit E from Photorhabdus laumondii subsp. laumondii (strain DSM 15139 / CIP 105565 / TT01) (Photorhabdus luminescens subsp. laumondii).